The following is a 329-amino-acid chain: Malate dehydrogenase (329 aa).

12 to 18 (GAAGQIG) provides a ligand contact to NAD(+). Substrate is bound by residues Arg-93 and Arg-99. NAD(+) is bound by residues Asn-106, Gln-113, and 130-132 (VGN). The substrate site is built by Asn-132 and Arg-163. Catalysis depends on His-188, which acts as the Proton acceptor.

This sequence belongs to the LDH/MDH superfamily. MDH type 2 family.

The catalysed reaction is (S)-malate + NAD(+) = oxaloacetate + NADH + H(+). Its function is as follows. Catalyzes the reversible oxidation of malate to oxaloacetate. The protein is Malate dehydrogenase of Streptomyces griseus subsp. griseus (strain JCM 4626 / CBS 651.72 / NBRC 13350 / KCC S-0626 / ISP 5235).